We begin with the raw amino-acid sequence, 155 residues long: Microsomal glutathione S-transferase 1 (155 aa).

The Lumenal segment spans residues 3–9 (DLKQLMD). Residues 10–33 (NEVLMAFTSYATIILAKMMFLSSA) traverse the membrane as a helical segment. Residues 34–62 (TAFQRLTNKVFANPEDCAGFGKGENAKKF) are Cytoplasmic-facing. R38 serves as a coordination point for glutathione. N6-acetyllysine occurs at positions 42, 55, and 60. The helical transmembrane segment at 63 to 96 (LRTDEKVERVRRAHLNDLENIVPFLGIGLLYSLS) threads the bilayer. 4 residues coordinate glutathione: R73, R74, H76, and E81. Residue Y93 is modified to 3'-nitrotyrosine; in vitro. The Lumenal portion of the chain corresponds to 97–99 (GPD). A helical transmembrane segment spans residues 100–123 (LSTALIHFRIFVGARIYHTIAYLT). Y121 serves as a coordination point for glutathione. Topologically, residues 124–128 (PLPQP) are cytoplasmic. Residues 129–148 (NRGLAFFVGYGVTLSMAYRL) form a helical membrane-spanning segment. Residues 149–155 (LRSRLYL) lie on the Lumenal side of the membrane.

Belongs to the MAPEG family. As to quaternary structure, homotrimer; The trimer binds only one molecule of glutathione. In terms of processing, in vitro, peroxynitrite induces nitration at Tyr-93 which activates the enzyme. In terms of tissue distribution, highest in the liver, followed by kidney and testis and much lower in seminal vesicles, spleen, lung and brain.

It is found in the endoplasmic reticulum membrane. The protein localises to the mitochondrion outer membrane. The catalysed reaction is RX + glutathione = an S-substituted glutathione + a halide anion + H(+). In vitro, can be activated by reagents that attack Cys-50 sulfhydryl, such as N-ethylmaleimide and via nitration of Tyr-93 by peroxynitrite. Functionally, conjugation of reduced glutathione to a wide number of exogenous and endogenous hydrophobic electrophiles. This Rattus norvegicus (Rat) protein is Microsomal glutathione S-transferase 1 (Mgst1).